Reading from the N-terminus, the 498-residue chain is Cytochrome P450 monooxygenase ltmP (498 aa).

The first 21 residues, 1–21 (MLMLHAVPVGICLLLWYVVYG), serve as a signal peptide directing secretion. Asn420 is a glycosylation site (N-linked (GlcNAc...) asparagine). Residue Cys435 coordinates heme.

It belongs to the cytochrome P450 family. Heme is required as a cofactor.

Its pathway is secondary metabolite biosynthesis. In terms of biological role, cytochrome P450 monooxygenase; part of the gene clusters that mediates the biosynthesis of lolitrems, indole-diterpene mycotoxins that are potent tremorgens in mammals, and are synthesized by clavicipitaceous fungal endophytes in association with their grass hosts. The geranylgeranyl diphosphate (GGPP) synthase ltmG is proposed to catalyze the first step in lolitrem biosynthesis. LtmG catalyzes a series of iterative condensations of isopentenyl diphosphate (IPP) with dimethylallyl diphosphate (DMAPP), geranyl diphosphate (GPP), and farnesyl diphosphate (FPP), to form GGPP. GGPP then condenses with indole-3-glycerol phosphate to form 3-geranylgeranylindole, an acyclic intermediate, to be incorporated into paxilline. Either ltmG or ltmC could be responsible for this step, as both are putative prenyl transferases. The FAD-dependent monooxygenase ltmM then catalyzes the epoxidation of the two terminal alkenes of the geranylgeranyl moiety, which is subsequently cyclized by ltmB, to paspaline. The cytochrome P450 monooxygenases ltmQ and ltmP can sequentially oxidize paspaline to terpendole E and terpendole F. Alternatively, ltmP converts paspaline to an intermediate which is oxidized by ltmQ to terpendole F. LtmF, ltmK, ltmE and ltmJ appear to be unique to the epichloe endophytes. The prenyltransferase ltmF is involved in the 27-hydroxyl-O-prenylation. The cytochrome P450 monooxygenase ltmK is required for the oxidative acetal ring formation. The multi-functional prenyltransferase ltmE is required for C20- and C21-prenylations of the indole ring of paspalanes and acts together with the cytochrome P450 monooxygenase ltmJ to yield lolitremanes by multiple oxidations and ring closures. The stereoisomer pairs of lolitriol and lolitrem N or lolitrem B and lolitrem F may be attributed to variations in the way in which ring closure can occur under the action of ltmJ. While the major product of this pathway is lolitrem B, the prenyl transferases and cytochrome P450 monooxygenases identified in this pathway have a remarkable versatility in their regio- and stereo-specificities to generate a diverse range of metabolites that are products of a metabolic grid rather than a linear pathway. The protein is Cytochrome P450 monooxygenase ltmP of Epichloe festucae var. lolii (Neotyphodium lolii).